Here is a 131-residue protein sequence, read N- to C-terminus: Large-conductance mechanosensitive channel (131 aa).

A run of 2 helical transmembrane segments spans residues 14–34 (VMDM…VTSL) and 71–91 (GNFI…FLLV).

This sequence belongs to the MscL family. Homopentamer.

It localises to the cell inner membrane. Channel that opens in response to stretch forces in the membrane lipid bilayer. May participate in the regulation of osmotic pressure changes within the cell. The chain is Large-conductance mechanosensitive channel from Dinoroseobacter shibae (strain DSM 16493 / NCIMB 14021 / DFL 12).